Here is a 183-residue protein sequence, read N- to C-terminus: Peptidyl-prolyl cis-trans isomerase 11 (183 aa).

Positions 20-182 (FLEVTAGGAP…LPIVVVQCGQ (163 aa)) constitute a PPIase cyclophilin-type domain.

The protein belongs to the cyclophilin-type PPIase family. PPIase H subfamily.

The enzyme catalyses [protein]-peptidylproline (omega=180) = [protein]-peptidylproline (omega=0). Functionally, PPIases accelerate the folding of proteins. It catalyzes the cis-trans isomerization of proline imidic peptide bonds in oligopeptides. This is Peptidyl-prolyl cis-trans isomerase 11 (cyn-11) from Caenorhabditis elegans.